A 365-amino-acid chain; its full sequence is Glycosyltransferase 8 domain-containing protein 1 (365 aa).

At 1–4 (MTVR) the chain is on the cytoplasmic side. The chain crosses the membrane as a helical; Signal-anchor for type II membrane protein span at residues 5–22 (RVNVVILVLLVVAFLIVL). The Lumenal portion of the chain corresponds to 23–365 (HRNLLNLNDF…HPIRKHVEEK (343 aa)). Residues Asn102, Asn181, Asn245, and Asn253 are each glycosylated (N-linked (GlcNAc...) asparagine).

This sequence belongs to the glycosyltransferase 8 family.

It is found in the membrane. This is Glycosyltransferase 8 domain-containing protein 1 (glt8d1) from Danio rerio (Zebrafish).